We begin with the raw amino-acid sequence, 150 residues long: uncharacterized protein (150 aa).

Positions M1 to S39 are cleaved as a signal peptide.

This is an uncharacterized protein from Saccharomyces cerevisiae (strain ATCC 204508 / S288c) (Baker's yeast).